A 219-amino-acid polypeptide reads, in one-letter code: tRNA (guanine-N(7)-)-methyltransferase (219 aa).

S-adenosyl-L-methionine is bound by residues E46, E71, N100, and D122. The active site involves D122. Residues K126, D158, and 199–202 contribute to the substrate site; that span reads TEYE.

This sequence belongs to the class I-like SAM-binding methyltransferase superfamily. TrmB family.

It catalyses the reaction guanosine(46) in tRNA + S-adenosyl-L-methionine = N(7)-methylguanosine(46) in tRNA + S-adenosyl-L-homocysteine. The protein operates within tRNA modification; N(7)-methylguanine-tRNA biosynthesis. Its function is as follows. Catalyzes the formation of N(7)-methylguanine at position 46 (m7G46) in tRNA. The chain is tRNA (guanine-N(7)-)-methyltransferase from Leuconostoc citreum (strain KM20).